A 541-amino-acid polypeptide reads, in one-letter code: Chaperonin GroEL 1 (541 aa).

Residues 29–32, 86–90, Gly413, 479–481, and Asp495 each bind ATP; these read TLGP, DGTTT, and NAA.

Belongs to the chaperonin (HSP60) family. As to quaternary structure, forms a cylinder of 14 subunits composed of two heptameric rings stacked back-to-back. Interacts with the co-chaperonin GroES.

The protein localises to the cytoplasm. It catalyses the reaction ATP + H2O + a folded polypeptide = ADP + phosphate + an unfolded polypeptide.. Functionally, together with its co-chaperonin GroES, plays an essential role in assisting protein folding. The GroEL-GroES system forms a nano-cage that allows encapsulation of the non-native substrate proteins and provides a physical environment optimized to promote and accelerate protein folding. This is Chaperonin GroEL 1 from Synechocystis sp. (strain ATCC 27184 / PCC 6803 / Kazusa).